Here is a 249-residue protein sequence, read N- to C-terminus: Ditrans,polycis-undecaprenyl-diphosphate synthase ((2E,6E)-farnesyl-diphosphate specific) (249 aa).

Aspartate 18 is an active-site residue. Aspartate 18 provides a ligand contact to Mg(2+). Substrate contacts are provided by residues 19–22, phenylalanine 23, lysine 31, histidine 35, and 63–65; these read GNNR and SSE. The Proton acceptor role is filled by asparagine 66. Residues tryptophan 67, arginine 69, arginine 186, and 192 to 194 contribute to the substrate site; that span reads RLS. Glutamate 205 is a Mg(2+) binding site.

Belongs to the UPP synthase family. In terms of assembly, homodimer. The cofactor is Mg(2+).

It catalyses the reaction 8 isopentenyl diphosphate + (2E,6E)-farnesyl diphosphate = di-trans,octa-cis-undecaprenyl diphosphate + 8 diphosphate. Functionally, catalyzes the sequential condensation of isopentenyl diphosphate (IPP) with (2E,6E)-farnesyl diphosphate (E,E-FPP) to yield (2Z,6Z,10Z,14Z,18Z,22Z,26Z,30Z,34E,38E)-undecaprenyl diphosphate (di-trans,octa-cis-UPP). UPP is the precursor of glycosyl carrier lipid in the biosynthesis of bacterial cell wall polysaccharide components such as peptidoglycan and lipopolysaccharide. In Acinetobacter baylyi (strain ATCC 33305 / BD413 / ADP1), this protein is Ditrans,polycis-undecaprenyl-diphosphate synthase ((2E,6E)-farnesyl-diphosphate specific).